The chain runs to 897 residues: MNVKETKLEDVLKSRGIDMKDAYNISEADIPEAKESTQKLMDIYYTLKVTADMEAAYWYNRTWWENDGEVIEVRRAKAVAASLSHMTPTILPYEKLVMNKTKNVRGAFPFPWVCASFFNAQAEALMNEVDAPAENEADSVSVVGAGGGNVTESYGNVISIAKKFGMRKEEIPVLVKTSKPWEGISVEELSNKYSKMTPGYDQFKNIMESVICMFDSFAIPQGREVINYYMPLQYGFDGIIKLCDEKIAEVMGEAGDDGDFGMSRGYYYAAMKEITKGLSAWCENYSKRAKYLASIETDSEIKANYEKIEEVMGNIAHKKPANFWEAIQMTLCCHFGVVNEDPQSGLSIGRLGQVLQPFYEKDVEDGIMTDEEVIELLELYRIKITCIECFASAGVSGGVLSGNTFNNLSLGGQNYDGLSAVTPLEYLIVEAGMRNQTPQPTLSVLYDEKTPEDFLMKAASCTKLGLGYPAWMNNQTGMNFMMRNYGPEGMDLHDARAWCLGGCLESAPGCFLPLEYNGKVTMIPGGASPTCGTGVHFIGMPKVLELVLTNGLDKRTGKQVYPPHNKKLDSYETMVNQWKEYMELTTDVVNRCNNIQMDIWRKYNMPAVNSLLKPDCFKKGKHIGTMGARYNSCINFESCGTITFVNSLSSIKKNVFDDSKFTIEEMTDAMLNNFGFKTAYETEVFSPDFRESTDKSTKYEKIFAACVNAPKYGNADKYADEIFKAYHYYIYDMTHKFRSYYGKPLYLCQISVSTHGPQGFVTLATADGRLAGTTYSDGSVSAAAGTDKNGIYAIFESATVYDHSMHQNAQMNLKLHPTAVKGINGTRKLLDLVRAYMRKGGFHVQFNVVDSKTLRDAQLTPEKYRELMVRVAGFTQYWCEIGKPIQDEVIYRTEYDK.

The PFL domain occupies Glu-35–Leu-770. Ser-344 and Cys-503 together coordinate 4-hydroxyphenylacetate. Residue Cys-503 is the Cysteine radical intermediate of the active site. Glu-505 functions as the Proton donor in the catalytic mechanism. Residues His-536 and Glu-637 each contribute to the 4-hydroxyphenylacetate site. The Glycine radical domain occupies Gly-778–Lys-897. Gly-873 bears the Glycine radical mark.

This sequence belongs to the glycyl radical enzyme (GRE) family. HPAD subfamily. Heterooctamer consisting of 4 large (HpdB) subunits and 4 small (HpdC) subunits, arranged as a tetramer of heterodimers. Also forms a catalytically inactive homodimer. Requires the activating protein CsdA to generate the key active site glycyl radical that is involved in catalysis. Post-translationally, phosphorylated on serine. Phosphorylation may trigger the formation of the active heterooctamers and thereby regulates enzyme activity.

The enzyme catalyses 4-hydroxyphenylacetate + H(+) = 4-methylphenol + CO2. It carries out the reaction 3,4-dihydroxyphenylacetate + H(+) = 4-methylcatechol + CO2. Functionally, glycyl radical subunit of the HPA decarboxylase that decarboxylates phenylacetates with a hydroxyl group in the p-position. Active toward 4-hydroxyphenylacetate and 3,4-dihydroxyphenylacetate, forming 4-methylphenol and 4-methylcatechol, respectively. Is likely involved in the catabolism of aromatic amino acids such as tyrosine fermentation. 4-methylphenol (p-cresol) formation provides metabolic toxicity, which allows an active suppression of other microbes and may provide growth advantages for the producers in highly competitive environments. The large subunit is the catalytic subunit that binds the substrate. The polypeptide is 4-hydroxyphenylacetate decarboxylase glycyl radical subunit (Clostridium scatologenes).